We begin with the raw amino-acid sequence, 89 residues long: MCDRKAVIKNADMSEEMQQDSVECATQALEKYNIEKDIAAHIKKEFDKKYNPTWHCIVGRNFGSYVTHETKHFIYFYLGQVAILLFKSG.

N6-acetyllysine is present on Lys36. Residue Lys43 forms a Glycyl lysine isopeptide (Lys-Gly) (interchain with G-Cter in SUMO2) linkage. Residues 67–89 form an interaction with ESR1 region; sequence THETKHFIYFYLGQVAILLFKSG. Ser88 bears the Phosphoserine mark.

Belongs to the dynein light chain family. Homodimer. Monomer; the monomeric form is incapable of binding to target proteins. The cytoplasmic dynein 1 complex consists of two catalytic heavy chains (HCs) and a number of non-catalytic subunits presented by intermediate chains (ICs), light intermediate chains (LICs) and light chains (LCs); the composition seems to vary in respect to the IC, LIC and LC composition. The heavy chain homodimer serves as a scaffold for the probable homodimeric assembly of the respective non-catalytic subunits. The ICs and LICs bind directly to the HC dimer and the LCs assemble on the IC dimer. Interacts with TXNDC17. Interacts with WWC1 and ESR1. The WWC1-DYNLL1 interaction is mandatory for the recruitment and transactivation functions of ESR1 or DYNLL1 to the target chromatin. Interacts with BCL2L11. Interacts with BCL2; the interaction is greatly enhanced in the nucleus and in mitochondria upon induction of apoptosis. Interacts with PAK1; the interaction requires dimeric DYNLL1. Interacts with MYZAP. Part of an astrin (SPAG5)-kinastrin (SKAP) complex containing KNSTRN, SPAG5, PLK1, DYNLL1 and SGO2. Interacts with ATMIN; this interaction inhibits ATMIN transcriptional activity and hence may play a role in a feedback loop whereby DYNLL1 inhibits transactivation of its own promoter by ATMIN. Interacts with NEK9 (not phosphorylated at 'Ser-944'). Interacts with BICD2. Interacts with BCAS1. Interacts with Basson/BSN. Interacts with HDAC6. Interacts with TPPP. Interacts with AMBRA1 (via TQT motifs); tethering AMBRA1 to the cytoskeleton. Interacts with FAM83D/CHICA (via C-terminus). Interacts with HMMR, SPAG5/Astrin and KNSTRN/Kinastrin. Interacts with TLK2. Interacts with NOS1. Interacts with WWC1, WWC2 and WWC3. Interacts with MRE11; inhibiting MRE11 homodimerization and activity. As to quaternary structure, (Microbial infection) Interacts with bovine immunodeficiency virus Gag protein; this interaction is critical for intracellular microtubule-dependent viral genome transport. Phosphorylation at Ser-88 promotes recruitment to DNA double-strand breaks (DSBs) by TP53BP1 and ability to inhibit MRE11.

The protein resides in the cytoplasm. It is found in the cytoskeleton. The protein localises to the microtubule organizing center. Its subcellular location is the centrosome. It localises to the chromosome. The protein resides in the nucleus. It is found in the mitochondrion. Functionally, acts as one of several non-catalytic accessory components of the cytoplasmic dynein 1 complex that are thought to be involved in linking dynein to cargos and to adapter proteins that regulate dynein function. Cytoplasmic dynein 1 acts as a motor for the intracellular retrograde motility of vesicles and organelles along microtubules. May play a role in changing or maintaining the spatial distribution of cytoskeletal structures. In addition to its role in cytoskeleton and transport, acts as a protein-protein adapter, which inhibits and/or sequesters target proteins. Involved in the response to DNA damage by acting as a key regulator of DNA end resection: when phosphorylated at Ser-88, recruited to DNA double-strand breaks (DSBs) by TP53BP1 and acts by disrupting MRE11 dimerization, thereby inhibiting DNA end resection. In a subset of DSBs, DYNLL1 remains unphosphorylated and promotes the recruitment of the Shieldin complex. Binds and inhibits the catalytic activity of neuronal nitric oxide synthase/NOS1. Promotes transactivation functions of ESR1 and plays a role in the nuclear localization of ESR1. Regulates apoptotic activities of BCL2L11 by sequestering it to microtubules. Upon apoptotic stimuli the BCL2L11-DYNLL1 complex dissociates from cytoplasmic dynein and translocates to mitochondria and sequesters BCL2 thus neutralizing its antiapoptotic activity. The sequence is that of Dynein light chain 1, cytoplasmic (DYNLL1) from Bos taurus (Bovine).